Reading from the N-terminus, the 96-residue chain is Nucleoid-associated protein CF0672 (96 aa).

This sequence belongs to the YbaB/EbfC family. As to quaternary structure, homodimer.

It localises to the cytoplasm. It is found in the nucleoid. Functionally, binds to DNA and alters its conformation. May be involved in regulation of gene expression, nucleoid organization and DNA protection. This is Nucleoid-associated protein CF0672 from Chlamydia felis (strain Fe/C-56) (Chlamydophila felis).